Here is a 511-residue protein sequence, read N- to C-terminus: Cobyric acid synthase (511 aa).

In terms of domain architecture, GATase cobBQ-type spans leucine 251–phenylalanine 443. Cysteine 332 serves as the catalytic Nucleophile. Residue histidine 435 is part of the active site.

Belongs to the CobB/CobQ family. CobQ subfamily.

The protein operates within cofactor biosynthesis; adenosylcobalamin biosynthesis. Its function is as follows. Catalyzes amidations at positions B, D, E, and G on adenosylcobyrinic A,C-diamide. NH(2) groups are provided by glutamine, and one molecule of ATP is hydrogenolyzed for each amidation. The sequence is that of Cobyric acid synthase from Listeria welshimeri serovar 6b (strain ATCC 35897 / DSM 20650 / CCUG 15529 / CIP 8149 / NCTC 11857 / SLCC 5334 / V8).